A 104-amino-acid chain; its full sequence is Salivary protein FS145 (104 aa).

The signal sequence occupies residues 1–18 (MKLFAVFLLFCLVNQIYC). 4 disulfides stabilise this stretch: cysteine 32/cysteine 80, cysteine 62/cysteine 89, cysteine 72/cysteine 100, and cysteine 76/cysteine 102. The Putative integrin attachment site; atypical (WGD) motif lies at 92–94 (WGD).

In terms of assembly, interacts with host integrin alpha-V/beta-3 (ITGAV:ITGB3).

It localises to the secreted. In terms of biological role, inhibits proliferation, adhesion and migration of host cells as well as host angiogenesis by blocking host integrin alpha-V/beta-3 (ITGAV:ITGB3). This Xenopsylla cheopis (Oriental rat flea) protein is Salivary protein FS145.